A 591-amino-acid chain; its full sequence is Aspartate--tRNA ligase (591 aa).

L-aspartate is bound at residue glutamate 173. The interval 197 to 200 (QLFK) is aspartate. Arginine 219 contributes to the L-aspartate binding site. Residues 219 to 221 (RDE) and glutamine 228 contribute to the ATP site. Histidine 448 is a binding site for L-aspartate. Glutamate 482 serves as a coordination point for ATP. Arginine 489 is an L-aspartate binding site. Residue 534-537 (GLDR) coordinates ATP.

Belongs to the class-II aminoacyl-tRNA synthetase family. Type 1 subfamily. Homodimer.

It is found in the cytoplasm. It catalyses the reaction tRNA(Asp) + L-aspartate + ATP = L-aspartyl-tRNA(Asp) + AMP + diphosphate. Functionally, catalyzes the attachment of L-aspartate to tRNA(Asp) in a two-step reaction: L-aspartate is first activated by ATP to form Asp-AMP and then transferred to the acceptor end of tRNA(Asp). This Shewanella sp. (strain MR-7) protein is Aspartate--tRNA ligase.